The primary structure comprises 128 residues: MRFAIVVTGPAYGTQQASSAFQFAQALIAEGHELSSVFFYREGVYNANQLTSPASDEFDLVRGWQQLNTQHGVALNICVAAALRRGVVDETEAGRLGLASSNLQTGFTLSGLGALAEASLTCDRVVQF.

Cys-78 serves as the catalytic Cysteine persulfide intermediate.

Belongs to the DsrE/TusD family. As to quaternary structure, heterohexamer, formed by a dimer of trimers. The hexameric TusBCD complex contains 2 copies each of TusB, TusC and TusD. The TusBCD complex interacts with TusE.

The protein resides in the cytoplasm. Its function is as follows. Part of a sulfur-relay system required for 2-thiolation of 5-methylaminomethyl-2-thiouridine (mnm(5)s(2)U) at tRNA wobble positions. Accepts sulfur from TusA and transfers it in turn to TusE. In Escherichia fergusonii (strain ATCC 35469 / DSM 13698 / CCUG 18766 / IAM 14443 / JCM 21226 / LMG 7866 / NBRC 102419 / NCTC 12128 / CDC 0568-73), this protein is Sulfurtransferase TusD.